A 612-amino-acid polypeptide reads, in one-letter code: Protein lin-61 (612 aa).

4 MBT repeats span residues 143 to 249 (YLWE…MDKI), 263 to 380 (NDMV…GYQL), 381 to 501 (NAKK…LVPP), and 508 to 607 (FRWD…LQPP).

Interacts preferentially with histone H3 that is dimethylated or trimethylated at 'Lys-9'.

It is found in the nucleus. Its subcellular location is the chromosome. In terms of biological role, synthetic multivulva class B (synMuvB) protein required to repress the induction of vulval development by Ras signaling. Unlike other synMuv proteins it does not associate with the multiprotein DRM complex and the NuRD-like complex. Interaction with methylated histone H3 is essential for vulva development. It has a role in maintaining genome stability. This chain is Protein lin-61 (lin-61), found in Caenorhabditis elegans.